Reading from the N-terminus, the 251-residue chain is Protein PBMUCL2 (251 aa).

The signal sequence occupies residues 1–22 (MPRYVPLLLLLLLLRCSERGGG). Disordered stretches follow at residues 36–55 (WRDGVRVPGEGASWDSDRAS) and 65–251 (LSQS…THLL). Residues 72 to 87 (KHPETSPKDSRIREND) are compositionally biased toward basic and acidic residues. Asn120 is a glycosylation site (N-linked (GlcNAc...) asparagine). Residues 150-164 (TKDSVTADPGTTENF) show a composition bias toward polar residues. The segment at 153 to 251 (SVTADPGTTE…TTKHGDTHLL (99 aa)) is 15 X 11 AA approximate repeats. The segment covering 241–251 (ETTKHGDTHLL) has biased composition (basic and acidic residues).

As to expression, detected in the brain, lung, spleen, thymus and prostate.

It is found in the secreted. This Homo sapiens (Human) protein is Protein PBMUCL2 (HCG22).